Here is a 213-residue protein sequence, read N- to C-terminus: Imidazole glycerol phosphate synthase subunit HisH (213 aa).

The 208-residue stretch at 4–211 folds into the Glutamine amidotransferase type-1 domain; that stretch reads NLGLIDYGMG…LTWLRNGAEP (208 aa). C82 acts as the Nucleophile in catalysis. Catalysis depends on residues H186 and E188.

Heterodimer of HisH and HisF.

Its subcellular location is the cytoplasm. The catalysed reaction is 5-[(5-phospho-1-deoxy-D-ribulos-1-ylimino)methylamino]-1-(5-phospho-beta-D-ribosyl)imidazole-4-carboxamide + L-glutamine = D-erythro-1-(imidazol-4-yl)glycerol 3-phosphate + 5-amino-1-(5-phospho-beta-D-ribosyl)imidazole-4-carboxamide + L-glutamate + H(+). It catalyses the reaction L-glutamine + H2O = L-glutamate + NH4(+). Its pathway is amino-acid biosynthesis; L-histidine biosynthesis; L-histidine from 5-phospho-alpha-D-ribose 1-diphosphate: step 5/9. Functionally, IGPS catalyzes the conversion of PRFAR and glutamine to IGP, AICAR and glutamate. The HisH subunit catalyzes the hydrolysis of glutamine to glutamate and ammonia as part of the synthesis of IGP and AICAR. The resulting ammonia molecule is channeled to the active site of HisF. The chain is Imidazole glycerol phosphate synthase subunit HisH from Synechococcus sp. (strain CC9605).